We begin with the raw amino-acid sequence, 136 residues long: Large ribosomal subunit protein uL16 (136 aa).

Belongs to the universal ribosomal protein uL16 family. In terms of assembly, part of the 50S ribosomal subunit.

Functionally, binds 23S rRNA and is also seen to make contacts with the A and possibly P site tRNAs. The protein is Large ribosomal subunit protein uL16 of Psychromonas ingrahamii (strain DSM 17664 / CCUG 51855 / 37).